Consider the following 438-residue polypeptide: uncharacterized protein (438 aa).

This is an uncharacterized protein from Encephalitozoon cuniculi (strain GB-M1) (Microsporidian parasite).